The sequence spans 247 residues: Cell division protein ZapD (247 aa).

This sequence belongs to the ZapD family. In terms of assembly, interacts with FtsZ.

The protein resides in the cytoplasm. Its function is as follows. Cell division factor that enhances FtsZ-ring assembly. Directly interacts with FtsZ and promotes bundling of FtsZ protofilaments, with a reduction in FtsZ GTPase activity. The chain is Cell division protein ZapD from Klebsiella pneumoniae (strain 342).